Consider the following 666-residue polypeptide: Protein translocase subunit SecA 2 (666 aa).

ATP-binding positions include glutamine 119, 137–141 (GEGKS), and aspartate 546.

This sequence belongs to the SecA family. In terms of assembly, monomer and homodimer. Part of the essential Sec protein translocation apparatus which comprises SecA, SecYEG and auxiliary proteins SecDF-YajC and YidC.

The protein resides in the cell inner membrane. The protein localises to the cytoplasm. The catalysed reaction is ATP + H2O + cellular proteinSide 1 = ADP + phosphate + cellular proteinSide 2.. In terms of biological role, part of the Sec protein translocase complex. Interacts with the SecYEG preprotein conducting channel. Has a central role in coupling the hydrolysis of ATP to the transfer of proteins into and across the cell membrane, serving both as a receptor for the preprotein-SecB complex and as an ATP-driven molecular motor driving the stepwise translocation of polypeptide chains across the membrane. In Nitrosospira multiformis (strain ATCC 25196 / NCIMB 11849 / C 71), this protein is Protein translocase subunit SecA 2.